Consider the following 682-residue polypeptide: E3 ubiquitin-protein ligase RNF103 (682 aa).

4 helical membrane passes run 6 to 26 (FFLL…EAIV), 326 to 346 (LFVL…FITQ), 366 to 386 (LLII…LDSF), and 411 to 431 (MFYS…GLLI). Acidic residues predominate over residues 525–542 (EEMSESSQDTENDSDSDN). Residues 525–549 (EEMSESSQDTENDSDSDNTDTFSSS) are disordered. An RING-type zinc finger spans residues 618–660 (CVVCLENFENGCLLMGLPCGHVFHQNCIVMWLAGGRHCCPVCR).

In terms of assembly, interacts with DERL1 and VCP. Expressed in different tissues including hippocampus, cerebral cortex, heart, kidney, spleen and lung. Expression is increased in hippocampus and frontal cortex after chronic treatment with antidepressants.

The protein localises to the endoplasmic reticulum membrane. The enzyme catalyses S-ubiquitinyl-[E2 ubiquitin-conjugating enzyme]-L-cysteine + [acceptor protein]-L-lysine = [E2 ubiquitin-conjugating enzyme]-L-cysteine + N(6)-ubiquitinyl-[acceptor protein]-L-lysine.. The protein operates within protein modification; protein ubiquitination. Acts as an E2-dependent E3 ubiquitin-protein ligase, probably involved in the ER-associated protein degradation pathway. In Rattus norvegicus (Rat), this protein is E3 ubiquitin-protein ligase RNF103 (Rnf103).